The sequence spans 299 residues: Taste receptor type 2 member 4 (299 aa).

Residues 1-9 (MLRLFYFSA) lie on the Extracellular side of the membrane. A helical transmembrane segment spans residues 10–30 (VIASVILNFVGIIMNLFITVV). Residues 31 to 46 (NCKTWVKSHRISSSDR) lie on the Cytoplasmic side of the membrane. The helical transmembrane segment at 47–67 (ILFSLGITRFLMLGLFLVNTI) threads the bilayer. Residues 68–81 (YFVSSNMERSVYLS) lie on the Extracellular side of the membrane. Residues 82 to 102 (AFFVLCFMFLDSSSLWFVTLL) form a helical membrane-spanning segment. The Cytoplasmic segment spans residues 103-131 (NILYCVKITNFQHSVFLLLKRSISPKIPR). The helical transmembrane segment at 132-152 (LLLAFVLISAFTTCLYITLSQ) threads the bilayer. At 153–172 (ASPFPELVTTRNNTSFNISE) the chain is on the extracellular side. Residues Asn164, Asn165, and Asn169 are each glycosylated (N-linked (GlcNAc...) asparagine). The helical transmembrane segment at 173-193 (GILSLVVSLVLSSSLQFIINV) threads the bilayer. The Cytoplasmic portion of the chain corresponds to 194–230 (TSASLLIHSLRRHIQKMQKNATGFWNPQMEAHVGAMK). The helical transmembrane segment at 231-251 (LMVYFLILYIPYSVATLVQYL) threads the bilayer. Over 252 to 262 (PFYAGMDMGTK) the chain is Extracellular. A helical transmembrane segment spans residues 263-283 (SICLIFATLYSPGHSVLIIIT). The Cytoplasmic portion of the chain corresponds to 284 to 299 (HPKLKTTAKKILCFKK).

This sequence belongs to the G-protein coupled receptor T2R family.

It is found in the membrane. It localises to the cell projection. The protein localises to the cilium membrane. Functionally, gustducin-coupled receptor implicated in the perception of bitter compounds in the oral cavity and the gastrointestinal tract. Signals through PLCB2 and the calcium-regulated cation channel TRPM5. In airway epithelial cells, binding of denatonium increases the intracellular calcium ion concentration and stimulates ciliary beat frequency. The polypeptide is Taste receptor type 2 member 4 (TAS2R4) (Gorilla gorilla gorilla (Western lowland gorilla)).